A 474-amino-acid chain; its full sequence is Putative matrix metalloproteinase (474 aa).

Positions 1-17 (MIIYFAVITCSLKLCRS) are cleaved as a signal peptide. A Zn(2+)-binding site is contributed by H189. The active site involves E190. Zn(2+) contacts are provided by H193 and H199. One copy of the Hemopexin repeat lies at 299-344 (AGVYDAISYVRGDLYVFVGDLHWRFDTSGMLHNGYPQPTGATWRLP).

This sequence belongs to the peptidase M10A family. Zn(2+) serves as cofactor.

This is Putative matrix metalloproteinase from Heliothis virescens ascovirus 3e (HvAV-3e).